A 338-amino-acid chain; its full sequence is Biotin synthase (338 aa).

In terms of domain architecture, Radical SAM core spans 59-284; that stretch reads EEVEIEGIVS…RTTLRFAGGR (226 aa). 3 residues coordinate [4Fe-4S] cluster: cysteine 74, cysteine 78, and cysteine 81. Residues cysteine 117, cysteine 209, and arginine 279 each contribute to the [2Fe-2S] cluster site.

Belongs to the radical SAM superfamily. Biotin synthase family. As to quaternary structure, homodimer. [4Fe-4S] cluster serves as cofactor. Requires [2Fe-2S] cluster as cofactor.

It carries out the reaction (4R,5S)-dethiobiotin + (sulfur carrier)-SH + 2 reduced [2Fe-2S]-[ferredoxin] + 2 S-adenosyl-L-methionine = (sulfur carrier)-H + biotin + 2 5'-deoxyadenosine + 2 L-methionine + 2 oxidized [2Fe-2S]-[ferredoxin]. It functions in the pathway cofactor biosynthesis; biotin biosynthesis; biotin from 7,8-diaminononanoate: step 2/2. In terms of biological role, catalyzes the conversion of dethiobiotin (DTB) to biotin by the insertion of a sulfur atom into dethiobiotin via a radical-based mechanism. The sequence is that of Biotin synthase from Corynebacterium urealyticum (strain ATCC 43042 / DSM 7109).